A 410-amino-acid chain; its full sequence is Multidrug resistance protein MdtM (410 aa).

The Cytoplasmic segment spans residues 1–11 (MPRFFTRHAAT). The helical transmembrane segment at 12 to 32 (LFFPMALILYDFAAYLSTDLI) threads the bilayer. Residues 33–48 (QPGIINVVRDFNADVS) are Periplasmic-facing. The chain crosses the membrane as a helical span at residues 49-69 (LAPAAVSLYLAGGMALQWLLG). Topologically, residues 70 to 78 (PLSDRIGRR) are cytoplasmic. Residues 79 to 99 (PVLITGALIFTLACAATMFTT) form a helical membrane-spanning segment. Residues 100–103 (SMTQ) are Periplasmic-facing. A helical transmembrane segment spans residues 104–124 (FLIARAIQGTSICFIATVGYV). Residues 125–140 (TVQEAFGQTKGIKLMA) lie on the Cytoplasmic side of the membrane. Residues 141–161 (IITSIVLIAPIIGPLSGAALM) traverse the membrane as a helical segment. Topologically, residues 162 to 167 (HFMHWK) are periplasmic. A helical transmembrane segment spans residues 168–188 (VLFAIIAVMGFISFVGLLLAM). Residues 189–216 (PETVKRGAVPFSAKSVLRDFRNVFCNRL) are Cytoplasmic-facing. A helical membrane pass occupies residues 217 to 237 (FLFGAATISLSYIPMMSWVAV). Residues 238 to 251 (SPVILIDAGSLTTS) lie on the Periplasmic side of the membrane. A helical transmembrane segment spans residues 252-272 (QFAWTQVPVFGAVIVANAIVA). Residues 273–282 (RFVKDPTEPR) lie on the Cytoplasmic side of the membrane. Residues 283-303 (FIWRAVPIQLVGLSLLIVGNL) form a helical membrane-spanning segment. The Periplasmic segment spans residues 304–307 (LSPH). The helical transmembrane segment at 308 to 328 (VWLWSVLGTSLYAFGIGLIFP) threads the bilayer. The Cytoplasmic segment spans residues 329-348 (TLFRFTLFSNKLPKGTVSAS). A helical membrane pass occupies residues 349 to 369 (LNMVILMVMSVSVEIGRWLWF). Topologically, residues 370 to 373 (NGGR) are periplasmic. The helical transmembrane segment at 374–394 (LPFHLLAVVAGVIVVFTLAGL) threads the bilayer. Residues 395 to 410 (LNRVRQHQAAELVEEQ) lie on the Cytoplasmic side of the membrane.

It belongs to the major facilitator superfamily. Monomer.

It is found in the cell inner membrane. It catalyses the reaction Na(+)(in) + 2 H(+)(out) = Na(+)(out) + 2 H(+)(in). The enzyme catalyses K(+)(in) + H(+)(out) = K(+)(out) + H(+)(in). Its activity is regulated as follows. Efflux is inhibited by the ionophore carbonyl cyanide 3-chlorophenylhydrazone (CCCP). Its function is as follows. Proton-dependent efflux pump. Confers resistance to a broad spectrum of chemically unrelated substrates. Overexpression confers resistance to acriflavine, chloramphenicol, norfloxacin, ethidium bromide and tetraphenylphosphonium bromide (TPP). Can also export a broad range of quaternary ammonium compounds (QACs) and contribute to the intrinsic resistance of E.coli to these antimicrobial compounds. In addition to its role in multidrug resistance, MdtM likely plays a physiological role in alkaline pH homeostasis and in resistance to bile salts. May function in alkaline pH homeostasis when millimolar concentrations of sodium or potassium are present in the growth medium. When overexpressed, can confer a tolerance to alkaline pH values up to 9.75. Probably acts as a low-affinity antiporter that catalyzes the exchange of internal Na(+) and K(+) cations for extracellular protons to maintain a stable internal pH, acid relative to outside, during exposure to alkaline environments. Can also catalyze Rb(+)/H(+) and Li(+)/H(+) antiport, but not Ca(2+)/H(+) exchange. The exact stoichiometry of antiport is unknown. Finally, it could contribute to bile salt resistance by catalyzing the transport of bile salts out of the cell cytoplasm. Mediates a bile salt/H(+) exchange driven by the electrochemical gradient. Binds to cholate and deoxycholate with micromolar affinity and catalyzes both cholate/H(+) and deoxycholate/H(+) exchange reactions. This Escherichia coli (strain K12) protein is Multidrug resistance protein MdtM.